The chain runs to 260 residues: Acetylglutamate kinase (260 aa).

Substrate is bound by residues 46-47 (GG), Arg68, and Asn160.

This sequence belongs to the acetylglutamate kinase family. ArgB subfamily.

The protein resides in the cytoplasm. It catalyses the reaction N-acetyl-L-glutamate + ATP = N-acetyl-L-glutamyl 5-phosphate + ADP. It functions in the pathway amino-acid biosynthesis; L-arginine biosynthesis; N(2)-acetyl-L-ornithine from L-glutamate: step 2/4. Functionally, catalyzes the ATP-dependent phosphorylation of N-acetyl-L-glutamate. The protein is Acetylglutamate kinase of Shewanella sp. (strain ANA-3).